The following is a 228-amino-acid chain: DNA repair and recombination protein RadB (228 aa).

The protein belongs to the eukaryotic RecA-like protein family. RadB subfamily.

Functionally, involved in DNA repair and in homologous recombination. May regulate the cleavage reactions of the branch-structured DNA. Has a very weak ATPase activity that is not stimulated by DNA. Binds DNA but does not promote DNA strands exchange. The sequence is that of DNA repair and recombination protein RadB from Thermococcus sibiricus (strain DSM 12597 / MM 739).